The primary structure comprises 183 residues: Ribosome maturation factor RimP (183 aa).

This sequence belongs to the RimP family.

The protein localises to the cytoplasm. Required for maturation of 30S ribosomal subunits. The chain is Ribosome maturation factor RimP from Leptothrix cholodnii (strain ATCC 51168 / LMG 8142 / SP-6) (Leptothrix discophora (strain SP-6)).